The chain runs to 427 residues: Serine--tRNA ligase (427 aa).

Residue 228 to 230 coordinates L-serine; that stretch reads TSE. Residue 259–261 coordinates ATP; sequence RSE. Glutamate 282 contacts L-serine. 346–349 is a binding site for ATP; that stretch reads EISS. Serine 384 is an L-serine binding site.

It belongs to the class-II aminoacyl-tRNA synthetase family. Type-1 seryl-tRNA synthetase subfamily. In terms of assembly, homodimer. The tRNA molecule binds across the dimer.

Its subcellular location is the cytoplasm. The enzyme catalyses tRNA(Ser) + L-serine + ATP = L-seryl-tRNA(Ser) + AMP + diphosphate + H(+). It carries out the reaction tRNA(Sec) + L-serine + ATP = L-seryl-tRNA(Sec) + AMP + diphosphate + H(+). It participates in aminoacyl-tRNA biosynthesis; selenocysteinyl-tRNA(Sec) biosynthesis; L-seryl-tRNA(Sec) from L-serine and tRNA(Sec): step 1/1. In terms of biological role, catalyzes the attachment of serine to tRNA(Ser). Is also able to aminoacylate tRNA(Sec) with serine, to form the misacylated tRNA L-seryl-tRNA(Sec), which will be further converted into selenocysteinyl-tRNA(Sec). This chain is Serine--tRNA ligase, found in Ehrlichia ruminantium (strain Welgevonden).